The sequence spans 171 residues: AN1-type zinc finger protein 2A (171 aa).

2 consecutive AN1-type zinc fingers follow at residues 4–52 (PDLG…KKDV) and 94–142 (KVFT…SSAS). The Zn(2+) site is built by Cys10, Cys15, Cys25, Cys28, Cys33, His36, His42, Cys44, Cys100, Cys105, Cys115, Cys118, Cys123, His126, His132, and Cys134. Positions 134-171 (CQAGSSSASRGRTSTSRAAEQKPSGVSWLAQRLRRTVK) are disordered. Low complexity predominate over residues 136-151 (AGSSSASRGRTSTSRA).

Its subcellular location is the cytoplasm. It is found in the nucleus. The chain is AN1-type zinc finger protein 2A (Zfand2a) from Mus musculus (Mouse).